The sequence spans 168 residues: G/U mismatch-specific DNA glycosylase (168 aa).

The protein belongs to the uracil-DNA glycosylase (UDG) superfamily. TDG/mug family. As to quaternary structure, binds DNA as a monomer.

The protein localises to the cytoplasm. It catalyses the reaction Specifically hydrolyzes mismatched double-stranded DNA and polynucleotides, releasing free uracil.. In terms of biological role, excises ethenocytosine and uracil, which can arise by alkylation or deamination of cytosine, respectively, from the corresponding mispairs with guanine in ds-DNA. It is capable of hydrolyzing the carbon-nitrogen bond between the sugar-phosphate backbone of the DNA and the mispaired base. The complementary strand guanine functions in substrate recognition. Required for DNA damage lesion repair in stationary-phase cells. The polypeptide is G/U mismatch-specific DNA glycosylase (Escherichia coli (strain UTI89 / UPEC)).